The chain runs to 326 residues: tRNA-modifying protein YgfZ (326 aa).

Positions 27 and 189 each coordinate folate.

The protein belongs to the tRNA-modifying YgfZ family.

The protein localises to the cytoplasm. Functionally, folate-binding protein involved in regulating the level of ATP-DnaA and in the modification of some tRNAs. It is probably a key factor in regulatory networks that act via tRNA modification, such as initiation of chromosomal replication. The polypeptide is tRNA-modifying protein YgfZ (Escherichia coli O6:H1 (strain CFT073 / ATCC 700928 / UPEC)).